The sequence spans 485 residues: Aspartyl/glutamyl-tRNA(Asn/Gln) amidotransferase subunit B (485 aa).

It belongs to the GatB/GatE family. GatB subfamily. In terms of assembly, heterotrimer of A, B and C subunits.

The enzyme catalyses L-glutamyl-tRNA(Gln) + L-glutamine + ATP + H2O = L-glutaminyl-tRNA(Gln) + L-glutamate + ADP + phosphate + H(+). It carries out the reaction L-aspartyl-tRNA(Asn) + L-glutamine + ATP + H2O = L-asparaginyl-tRNA(Asn) + L-glutamate + ADP + phosphate + 2 H(+). In terms of biological role, allows the formation of correctly charged Asn-tRNA(Asn) or Gln-tRNA(Gln) through the transamidation of misacylated Asp-tRNA(Asn) or Glu-tRNA(Gln) in organisms which lack either or both of asparaginyl-tRNA or glutaminyl-tRNA synthetases. The reaction takes place in the presence of glutamine and ATP through an activated phospho-Asp-tRNA(Asn) or phospho-Glu-tRNA(Gln). The protein is Aspartyl/glutamyl-tRNA(Asn/Gln) amidotransferase subunit B of Bordetella avium (strain 197N).